Consider the following 157-residue polypeptide: Small ribosomal subunit protein uS7 (157 aa).

The protein belongs to the universal ribosomal protein uS7 family. In terms of assembly, part of the 30S ribosomal subunit. Contacts proteins S9 and S11.

Its function is as follows. One of the primary rRNA binding proteins, it binds directly to 16S rRNA where it nucleates assembly of the head domain of the 30S subunit. Is located at the subunit interface close to the decoding center, probably blocks exit of the E-site tRNA. This Verminephrobacter eiseniae (strain EF01-2) protein is Small ribosomal subunit protein uS7.